The following is a 311-amino-acid chain: Ketoisovalerate oxidoreductase subunit VorB (311 aa).

In terms of assembly, heterotetramer of one alpha, one beta, one delta and one gamma chain.

The enzyme catalyses 3-methyl-2-oxobutanoate + 2 oxidized [2Fe-2S]-[ferredoxin] + CoA = 2-methylpropanoyl-CoA + 2 reduced [2Fe-2S]-[ferredoxin] + CO2 + H(+). The polypeptide is Ketoisovalerate oxidoreductase subunit VorB (vorB) (Pyrococcus abyssi (strain GE5 / Orsay)).